The following is a 247-amino-acid chain: Transmembrane protein 33 (247 aa).

Ala2 carries the N-acetylalanine modification. At Ala2–Arg31 the chain is on the lumenal side. A helical transmembrane segment spans residues Leu32 to Ala52. Residues Ser53–Leu100 lie on the Cytoplasmic side of the membrane. Residues Ile101 to Leu121 form a helical membrane-spanning segment. Residues His122–Asn155 are Lumenal-facing. The chain crosses the membrane as a helical span at residues Ile156–Phe176. Residues Ser177–Ala247 lie on the Cytoplasmic side of the membrane.

It belongs to the PER33/POM33 family. In terms of assembly, interacts with EIF2AK3. Interacts with RTN1, RTN2, RTN3, RTN4 and ARL6IP1. Interacts with RNF5. Interacts with RNF26. Interacts with PKD2.

The protein resides in the endoplasmic reticulum membrane. Its subcellular location is the melanosome. It is found in the nucleus envelope. Functionally, acts as a regulator of the tubular endoplasmic reticulum (ER) network by modulating intracellular calcium homeostasis. Mechanistically, stimulates PKD2 calcium-dependent activity. Suppresses the RTN3/4-induced formation of the ER tubules. Positively regulates PERK-mediated and IRE1-mediated unfolded protein response signaling. Plays an essential role in VEGF-mediated release of Ca(2+) from ER stores during angiogenesis. Also plays a role in the modulation of innate immune signaling through the cGAS-STING pathway by interacting with RNF26. Participates in lipid metabolism by acting as a downstream effector of the pyruvate kinase/PKM. Forms a complex with RNF5 to facilitate polyubiquitination and subsequent degradation of SCAP on the ER membrane. The sequence is that of Transmembrane protein 33 (Tmem33) from Mus musculus (Mouse).